The primary structure comprises 282 residues: Undecaprenyl-diphosphatase (282 aa).

Transmembrane regions (helical) follow at residues 2-22 (FDFIKSIIIGIVEGLTEFLPV), 47-67 (FTAVFDYAIQLGAIFAVIQLY), 90-110 (WIKVIVGVLPAMVFGLLLNNF), 115-135 (LLNPWVVSATLIIYGIAFIVI), 152-172 (ITFKMALFIGLFQVLSLVPGT), 190-210 (FVAAEFSFFLSIPVMFGVTIL), 225-245 (AQLFVMLIGFVVSWVVALFAI), and 259-279 (IFGWYRIVVGILFLILGIAGL).

It belongs to the UppP family.

It localises to the cell membrane. The enzyme catalyses di-trans,octa-cis-undecaprenyl diphosphate + H2O = di-trans,octa-cis-undecaprenyl phosphate + phosphate + H(+). In terms of biological role, catalyzes the dephosphorylation of undecaprenyl diphosphate (UPP). Confers resistance to bacitracin. The polypeptide is Undecaprenyl-diphosphatase (Leuconostoc citreum (strain KM20)).